A 644-amino-acid chain; its full sequence is MGKIIGIDLGTTNSCVSVLEGDKAKVIENAEGDRTTPSIVAFTDDNEILVGQSAKRQAVTNPRNTLFAVKRLIGRKFTDDVVQKDIKMVPYSIVGADNGDAWVEVKGDKKAPPQISAEVLKKMKKTAEDYLGEKVTEAVITVPAYFNDSQRQATKDAGKIAGLEVKRIINEPTAAALAYGMDKAKGDRTIAVYDLGGGTFDISVIEIADVDGEHQFEVLSTNGDTFLGGEDFDLRLIEYLAEEFKKSNGIDLHNDPLALQRLKEAAEKAKIELSSSQQTEVNLPYITADATGPKHLVVKLTRAKLESLVEELVNRSLEPVKMAIKDADLSVSEIDDVILVGGQTRMPLVQQKVAEFFGKEPRKDVNPDEAVAMGAAIQGAVLSGDVKDVLLLDVTPLTLGIETMGGVATPLIEKNTTIPTKKSQVFSTAEDNQTAVTIHVVQGERKQAAQNKSLGRFDLADIPPAPRGMPQVEVTFDIDANGILNVSAKDKATGKEQSIVIKASSGLSDDEIENMVKDAEANAEADRKFEELVSARNTLEGLVHATKKTLEEAGDKATAEEKSAIEAAITEAEEALKSGDKDAIEAATKKVTDASGSLAQKLYAEQSAQQQGSAGATGGEQPKADKAADDGVVDAEFEEVKDDK.

Threonine 199 bears the Phosphothreonine; by autocatalysis mark. The segment at 602–644 is disordered; that stretch reads LYAEQSAQQQGSAGATGGEQPKADKAADDGVVDAEFEEVKDDK. Residues 604–614 are compositionally biased toward low complexity; sequence AEQSAQQQGSA. Residues 631–644 show a composition bias toward acidic residues; that stretch reads GVVDAEFEEVKDDK.

The protein belongs to the heat shock protein 70 family.

Acts as a chaperone. The chain is Chaperone protein DnaK from Teredinibacter turnerae (strain ATCC 39867 / T7901).